We begin with the raw amino-acid sequence, 814 residues long: MPFCSYQEGLKVASDLGNKAIQTEASLSSLSPVASPIPTLQKAFPIYISAAEAYGHLLSSKLVPQSDIETVKRKWRLVLERAEKVKSRIEQLGGHVAKAEIGDRGEEIAVLRRASLINGVAVELWRPPGDTFDAGEPYREAVQPELAAAQLDMDPEWRDIQADCWLHQAPNEGDWVMRQGPVSDCSVVAAMGVGIKHAGQFGTAFGWENLYPQDAHGRPRRSKNGKHILKLLLNGAWRSVVLDSLLPFSKRDKTPLFTTCHPAPHILPTSVGSPWAPLALKGYFKVHGGYSLRGSNPSSDIYEFMGWIPERIGLKEGFQREKEWKRMKEAWHKGNVMVSLGTGSKVSEGLVKLHAYGVIRLREEGHERILDIFDPGATSFTMSWDQVCAEFEALHLNWKPSVMPNTATRHWSWPKPPDLPSDADPGMMNTRYRLHVNASSPSSSLSEVWILLSQHITSRDRPLDDIALHVFEGLGPNNSRNLGAIYSEGLERTNPYTNSNHLLVRYQLRRPTSDLTLIPSRDRGIDQTGFTLNAFAPASISLSLERISRTLPFTQRISGNLTDRSAGGHPGWPTHMTNPQYKVVVRPGEGKSEISGRIILHGEKDVPWNVKLIWGRGQLVYELSEDLIVADTGSYSYGIAYCDIPELQPDTYTLIVSAFEPGQTGLFSLSLEATAPVSIIPIAAEGAGMYNRVVNGFWTERTAGGRPSGGTYESNPRVEMVLSKPATIQSRLYLPTRSPVPINLTIFKRAQGGALGEQLVTTGPYSDSICGVSTGKMKLDSGVYLLVPSSYEKSKGGWVLKIWSDVALSAEIVG.

Positions 118 to 400 constitute a Calpain catalytic domain; that stretch reads NGVAVELWRP…FEALHLNWKP (283 aa). Active-site residues include Cys-185 and His-354.

It belongs to the peptidase C2 family. PalB/RIM13 subfamily.

In terms of biological role, required for the proteolytic cleavage of the transcription factor RIM101 in response to alkaline ambient pH. The chain is Calpain-like protease palB/RIM13 (RIM13) from Cryptococcus neoformans var. neoformans serotype D (strain B-3501A) (Filobasidiella neoformans).